The primary structure comprises 86 residues: Large ribosomal subunit protein eL31 (86 aa).

This sequence belongs to the eukaryotic ribosomal protein eL31 family.

This chain is Large ribosomal subunit protein eL31, found in Methanopyrus kandleri (strain AV19 / DSM 6324 / JCM 9639 / NBRC 100938).